A 446-amino-acid polypeptide reads, in one-letter code: ATP-dependent protease ATPase subunit HslU (446 aa).

ATP contacts are provided by residues Val-18, 60 to 65, Asp-259, Glu-324, and Arg-396; that span reads GVGKTE.

The protein belongs to the ClpX chaperone family. HslU subfamily. A double ring-shaped homohexamer of HslV is capped on each side by a ring-shaped HslU homohexamer. The assembly of the HslU/HslV complex is dependent on binding of ATP.

The protein resides in the cytoplasm. ATPase subunit of a proteasome-like degradation complex; this subunit has chaperone activity. The binding of ATP and its subsequent hydrolysis by HslU are essential for unfolding of protein substrates subsequently hydrolyzed by HslV. HslU recognizes the N-terminal part of its protein substrates and unfolds these before they are guided to HslV for hydrolysis. In Acidovorax ebreus (strain TPSY) (Diaphorobacter sp. (strain TPSY)), this protein is ATP-dependent protease ATPase subunit HslU.